The following is a 164-amino-acid chain: UPF0114 protein YqhA (164 aa).

The next 3 helical transmembrane spans lie at 15 to 35 (LLAP…LKFF), 53 to 73 (LILV…LVMV), and 136 to 156 (LMWY…MGYL).

Belongs to the UPF0114 family.

The protein resides in the cell membrane. In Salmonella dublin (strain CT_02021853), this protein is UPF0114 protein YqhA.